The following is a 214-amino-acid chain: Ribosomal RNA small subunit methyltransferase G (214 aa).

Residues Gly-81, Met-86, 132–133, and Arg-147 contribute to the S-adenosyl-L-methionine site; that span reads VE.

The protein belongs to the methyltransferase superfamily. RNA methyltransferase RsmG family.

The protein resides in the cytoplasm. It carries out the reaction guanosine(527) in 16S rRNA + S-adenosyl-L-methionine = N(7)-methylguanosine(527) in 16S rRNA + S-adenosyl-L-homocysteine. Specifically methylates the N7 position of guanine in position 527 of 16S rRNA. The sequence is that of Ribosomal RNA small subunit methyltransferase G from Ectopseudomonas mendocina (strain ymp) (Pseudomonas mendocina).